The following is a 111-amino-acid chain: Ribosome-binding factor A (111 aa).

It belongs to the RbfA family. In terms of assembly, monomer. Binds 30S ribosomal subunits, but not 50S ribosomal subunits or 70S ribosomes.

Its subcellular location is the cytoplasm. One of several proteins that assist in the late maturation steps of the functional core of the 30S ribosomal subunit. Associates with free 30S ribosomal subunits (but not with 30S subunits that are part of 70S ribosomes or polysomes). Required for efficient processing of 16S rRNA. May interact with the 5'-terminal helix region of 16S rRNA. The sequence is that of Ribosome-binding factor A from Helicobacter pylori (strain HPAG1).